We begin with the raw amino-acid sequence, 355 residues long: Peptide chain release factor 1 (355 aa).

At Gln-233 the chain carries N5-methylglutamine. Positions 280–293 (KRRQKEQERSDSRR) are enriched in basic and acidic residues. Residues 280–310 (KRRQKEQERSDSRRGQVGSGDRSERIRTYNF) are disordered.

The protein belongs to the prokaryotic/mitochondrial release factor family. In terms of processing, methylated by PrmC. Methylation increases the termination efficiency of RF1.

It is found in the cytoplasm. Functionally, peptide chain release factor 1 directs the termination of translation in response to the peptide chain termination codons UAG and UAA. The sequence is that of Peptide chain release factor 1 (prfA) from Rickettsia prowazekii (strain Madrid E).